Reading from the N-terminus, the 199-residue chain is Putative lectin L633 (199 aa).

The N-terminal stretch at 1 to 25 is a signal peptide; sequence MNILLLLMLLTSIILLVILIFLAYN. The segment covering 35–48 has biased composition (polar residues); sequence CITPAPESQSISPD. The segment at 35 to 74 is disordered; the sequence is CITPAPESQSISPDQTTQLQTTTPVTSTPSNPTPTTIIPN. Over residues 49–73 the composition is skewed to low complexity; sequence QTTQLQTTTPVTSTPSNPTPTTIIP. A Bulb-type lectin domain is found at 84-195; it reads EIVSNGDNVL…LGQELWCATR (112 aa). A glycan (N-linked (GlcNAc...) asparagine; by host) is linked at Asn-121.

It is found in the secreted. The polypeptide is Putative lectin L633 (Acanthamoeba polyphaga (Amoeba)).